The chain runs to 601 residues: AT-rich interactive domain-containing protein 3A (601 aa).

Residues 1–224 (MKLQAVMETL…HMASQMPPPD (224 aa)) form a disordered region. Over residues 60–89 (MAALAAMRAAAAGLGHPSSPGGSEDGPPIS) the composition is skewed to low complexity. S78, S82, and S89 each carry phosphoserine. Residue T99 is modified to Phosphothreonine. Residue S102 is modified to Phosphoserine. Residues 114 to 123 (GHAEGDRHLM) are compositionally biased toward basic and acidic residues. S127 is subject to Phosphoserine. An acidic region spans residues 128–165 (DDDDTKSKWEEQELEELGEEEEEEEEEDDFEEEEEEEE). Positions 139–166 (QELEELGEEEEEEEEEDDFEEEEEEEEG) are enriched in acidic residues. The 93-residue stretch at 243 to 335 (DPKRKEFLDD…YLYPYECERR (93 aa)) folds into the ARID domain. Phosphoserine is present on residues S358 and S367. Glycyl lysine isopeptide (Lys-Gly) (interchain with G-Cter in SUMO2) cross-links involve residues K403, K404, K457, and K467. The region spanning 449-546 (AALEQLREKL…GVLFAQPPPP (98 aa)) is the REKLES domain. The interval 450–493 (ALEQLREKLESTEPPEKKMALVADEQQRLMQRAVQQSFLAMTAQ) is important for nuclear localization. Positions 495–518 (PMNIRINSQASESRQDSAVSLTSA) are homodimerization. The interval 542-562 (QPPPPTAPSAPGKGGVSSIGT) is important for cytoplasmic localization. Positions 545 to 601 (PPTAPSAPGKGGVSSIGTNTTTGSRTGASGSTVSGGQVGLPGVSTPTMSSTSNNSLP) are disordered. 2 stretches are compositionally biased toward low complexity: residues 559–579 (SIGTNTTTGSRTGASGSTVSG) and 588–601 (STPTMSSTSNNSLP).

As to quaternary structure, homodimer. Heterodimer with ARID3B. Interacts with E2F1. Interacts with GTF2I and BTK. B-cell specific in the adult. Expressed in B-cell progenitors, down-regulated in the immature B-cell stage, and is up-regulated again at later stages of B-lymphocyte differentiation.

It is found in the nucleus. Its subcellular location is the cytoplasm. Its function is as follows. Transcription factor involved in B-cell differentiation. Binds a VH promoter proximal site necessary for induced mu-heavy-chain transcription. Binds the minor groove of a restricted ATC sequence that is sufficient for nuclear matrix association. This sequence motif is present in matrix-associating regions (MARS) proximal to the promoter and flanking E mu. Activates E mu-driven transcription by binding these sites. May be involved in the control of cell cycle progression by the RB1/E2F1 pathway. The sequence is that of AT-rich interactive domain-containing protein 3A (Arid3a) from Mus musculus (Mouse).